We begin with the raw amino-acid sequence, 295 residues long: 3-methyl-2-oxobutanoate hydroxymethyltransferase (295 aa).

Asp53 and Asp92 together coordinate Mg(2+). 3-methyl-2-oxobutanoate contacts are provided by residues Asp53 to Ser54, Asp92, and Lys122. Mg(2+) is bound at residue Glu124. Glu191 (proton acceptor) is an active-site residue.

The protein belongs to the PanB family. As to quaternary structure, homodecamer; pentamer of dimers. Requires Mg(2+) as cofactor.

It localises to the cytoplasm. The enzyme catalyses 3-methyl-2-oxobutanoate + (6R)-5,10-methylene-5,6,7,8-tetrahydrofolate + H2O = 2-dehydropantoate + (6S)-5,6,7,8-tetrahydrofolate. It functions in the pathway cofactor biosynthesis; (R)-pantothenate biosynthesis; (R)-pantoate from 3-methyl-2-oxobutanoate: step 1/2. Functionally, catalyzes the reversible reaction in which hydroxymethyl group from 5,10-methylenetetrahydrofolate is transferred onto alpha-ketoisovalerate to form ketopantoate. This chain is 3-methyl-2-oxobutanoate hydroxymethyltransferase, found in Koribacter versatilis (strain Ellin345).